The chain runs to 129 residues: UPF0325 protein YPTS_3127 (129 aa).

This sequence belongs to the UPF0325 family.

The sequence is that of UPF0325 protein YPTS_3127 from Yersinia pseudotuberculosis serotype IB (strain PB1/+).